The sequence spans 214 residues: Adenylate kinase (214 aa).

10-15 (GAGKGT) serves as a coordination point for ATP. The interval 30-59 (STGDMLRAAVKAGTPLGLEAKKVMDAGQLV) is NMP. AMP is bound by residues Thr-31, Arg-36, 57-59 (QLV), 85-88 (GFPR), and Gln-92. Residues 122–159 (GRRVHSGSGRVYHVVFNPPKVEGKDDVTGEDLSIRPDD) form an LID region. Residues Arg-123 and 132 to 133 (VY) contribute to the ATP site. AMP contacts are provided by Arg-156 and Arg-167. Gln-200 provides a ligand contact to ATP.

It belongs to the adenylate kinase family. In terms of assembly, monomer.

It is found in the cytoplasm. The enzyme catalyses AMP + ATP = 2 ADP. It functions in the pathway purine metabolism; AMP biosynthesis via salvage pathway; AMP from ADP: step 1/1. Catalyzes the reversible transfer of the terminal phosphate group between ATP and AMP. Plays an important role in cellular energy homeostasis and in adenine nucleotide metabolism. The sequence is that of Adenylate kinase from Shewanella denitrificans (strain OS217 / ATCC BAA-1090 / DSM 15013).